The following is a 443-amino-acid chain: Structure-specific endonuclease subunit SLX1 homolog (443 aa).

Residues 1–27 (METFILSSDSDDDSGPPPSKRRTIEGI) form a disordered region. Residues 171–258 (EFYGVYCLIS…PLVSKSLKEK (88 aa)) enclose the GIY-YIG domain. The SLX1-type zinc finger occupies 340 to 395 (CRICGKDIEKLWSLVRCISATCPSHFHSKCLSENGLKLKNEHVDHVYPLKANCPTC).

Belongs to the SLX1 family. As to quaternary structure, forms a heterodimer with him-18/slx-4. Requires a divalent metal cation as cofactor.

It is found in the nucleus. Catalytic subunit of a heterodimeric structure-specific endonuclease that resolves DNA secondary structures generated during DNA repair and recombination. Has endonuclease activity towards branched DNA substrates, introducing single-strand cuts in duplex DNA close to junctions with ss-DNA (Potential). Has a preference for replication forks over 5' flap structures or Holliday junctions and shows much lower activity toward 3' flap structures. Required for proper crossover distribution through inhibition of crossover formation at the central region of chromosomes. This chain is Structure-specific endonuclease subunit SLX1 homolog, found in Caenorhabditis elegans.